Here is a 531-residue protein sequence, read N- to C-terminus: Protein arginine N-methyltransferase 3 (531 aa).

A disordered region spans residues 1-43; it reads MCSLASGATGGRGAVENEEDLPELSDSGDEAAWEDEDDADLPH. Position 2 is an N-acetylcysteine (Cys2). Over residues 16–39 the composition is skewed to acidic residues; that stretch reads ENEEDLPELSDSGDEAAWEDEDDA. 2 positions are modified to phosphoserine: Ser25 and Ser27. The C2H2-type zinc-finger motif lies at 48–71; the sequence is TPCLFCNRLFTSAEETFSHCKSEH. Residues 48–71 form an interaction with ZNF200 region; that stretch reads TPCLFCNRLFTSAEETFSHCKSEH. Ser171 is subject to Phosphoserine. Positions 186 to 531 are mediates interaction with ALDH1A1; it reads MKQFAQDFVM…NNSTQTYGLQ (346 aa). Positions 217 to 531 constitute an SAM-dependent MTase PRMT-type domain; it reads DGVYFSSYGH…NNSTQTYGLQ (315 aa). Residues Arg239, Gly263, Asp285, Ile313, and Glu314 each coordinate S-adenosyl-L-homocysteine. Residues Glu329 and Glu338 contribute to the active site. Ser343 is an S-adenosyl-L-homocysteine binding site.

It belongs to the class I-like SAM-binding methyltransferase superfamily. Protein arginine N-methyltransferase family. In terms of assembly, monomer and homodimer. Interacts with EPB41L3 (via FERM domain); the interaction is direct and inhibits the protein-arginine N-methyltransferase activity of PRMT3. Interacts with the 40S ribosomal protein RPS2. Interacts with ALDH1A1; the interaction is direct, inhibits ALDH1A1 aldehyde dehydrogenase activity and is independent of the methyltransferase activity of PRMT3. Interacts (via zinc-finger) with ZNF200 (via C-terminus); the interaction is direct and required to localize PRMT3 to the nucleus and inhibit its proteasomal degradation.

It localises to the cytoplasm. The protein resides in the cytosol. The protein localises to the nucleus. The enzyme catalyses L-arginyl-[protein] + S-adenosyl-L-methionine = N(omega)-methyl-L-arginyl-[protein] + S-adenosyl-L-homocysteine + H(+). It catalyses the reaction L-arginyl-[protein] + 2 S-adenosyl-L-methionine = N(omega),N(omega)-dimethyl-L-arginyl-[protein] + 2 S-adenosyl-L-homocysteine + 2 H(+). Its activity is regulated as follows. Inhibited by N-ethylmaleimide and high concentrations of zinc chloride. Allosterically inhibited by SGC707. Allosterically inhibited by (1-(benzo[d][1,2,3]thiadiazol- 6-yl)-3-(2-cyclohexenylethyl)urea) and derivatives thereof. Protein-arginine N-methyltransferase that catalyzes both the monomethylation and asymmetric dimethylation of the guanidino nitrogens of arginine residues in target proteins, and therefore falls into the group of type I methyltransferases. Catalyzes the asymmetric arginine dimethylation at multiple sites in the Arg/Gly-rich region of small ribosomal subunit protein uS5/RPS2. Also appears to methylate other ribosomal proteins. May regulate retinoic acid synthesis and signaling by inhibiting ALDH1A1 retinal dehydrogenase activity. Contributes to methylation of histone H4 'Arg-3', a specific tag for epigenetic transcriptional activation. Mediates asymmetric arginine dimethylation of histone H4 'Arg-3' (H4R3me2a) in the promoter region of miRNA miR-3648, to promote its transcription and osteogenesis. The protein is Protein arginine N-methyltransferase 3 of Homo sapiens (Human).